Consider the following 183-residue polypeptide: Dual-action ribosomal maturation protein DarP (183 aa).

This sequence belongs to the DarP family.

The protein resides in the cytoplasm. Its function is as follows. Member of a network of 50S ribosomal subunit biogenesis factors which assembles along the 30S-50S interface, preventing incorrect 23S rRNA structures from forming. Promotes peptidyl transferase center (PTC) maturation. The sequence is that of Dual-action ribosomal maturation protein DarP from Shigella boydii serotype 18 (strain CDC 3083-94 / BS512).